Reading from the N-terminus, the 1400-residue chain is DNA-directed RNA polymerase subunit beta' (1400 aa).

Residues cysteine 71, cysteine 73, cysteine 86, and cysteine 89 each coordinate Zn(2+). Positions 462, 464, and 466 each coordinate Mg(2+). 4 residues coordinate Zn(2+): cysteine 811, cysteine 885, cysteine 892, and cysteine 895.

It belongs to the RNA polymerase beta' chain family. As to quaternary structure, the RNAP catalytic core consists of 2 alpha, 1 beta, 1 beta' and 1 omega subunit. When a sigma factor is associated with the core the holoenzyme is formed, which can initiate transcription. Requires Mg(2+) as cofactor. The cofactor is Zn(2+).

It catalyses the reaction RNA(n) + a ribonucleoside 5'-triphosphate = RNA(n+1) + diphosphate. Functionally, DNA-dependent RNA polymerase catalyzes the transcription of DNA into RNA using the four ribonucleoside triphosphates as substrates. The protein is DNA-directed RNA polymerase subunit beta' of Brucella canis (strain ATCC 23365 / NCTC 10854 / RM-666).